Reading from the N-terminus, the 261-residue chain is uncharacterized protein (261 aa).

The protein belongs to the BtpA family.

This is an uncharacterized protein from Methanocaldococcus jannaschii (strain ATCC 43067 / DSM 2661 / JAL-1 / JCM 10045 / NBRC 100440) (Methanococcus jannaschii).